The following is a 454-amino-acid chain: Bifunctional protein GlmU (454 aa).

Residues 1–232 (MTDRTCLSIV…VDNVIGINNR (232 aa)) are pyrophosphorylase. UDP-N-acetyl-alpha-D-glucosamine is bound by residues 11 to 14 (LAAG), Lys-25, Gln-78, and 83 to 84 (GT). Asp-108 provides a ligand contact to Mg(2+). 4 residues coordinate UDP-N-acetyl-alpha-D-glucosamine: Gly-144, Glu-158, Asn-173, and Asn-230. Asn-230 lines the Mg(2+) pocket. Residues 233–253 (VELAEAEAIWQQRKRREMMLA) are linker. The interval 254–454 (GVTLIAPETV…AIKAAKTATK (201 aa)) is N-acetyltransferase. The UDP-N-acetyl-alpha-D-glucosamine site is built by Arg-319 and Lys-337. His-349 acts as the Proton acceptor in catalysis. The UDP-N-acetyl-alpha-D-glucosamine site is built by Tyr-352 and Asn-363. Acetyl-CoA contacts are provided by residues Ala-366, 372-373 (NY), Ser-391, Ser-409, and Arg-426.

In the N-terminal section; belongs to the N-acetylglucosamine-1-phosphate uridyltransferase family. It in the C-terminal section; belongs to the transferase hexapeptide repeat family. As to quaternary structure, homotrimer. The cofactor is Mg(2+).

The protein resides in the cytoplasm. The catalysed reaction is alpha-D-glucosamine 1-phosphate + acetyl-CoA = N-acetyl-alpha-D-glucosamine 1-phosphate + CoA + H(+). The enzyme catalyses N-acetyl-alpha-D-glucosamine 1-phosphate + UTP + H(+) = UDP-N-acetyl-alpha-D-glucosamine + diphosphate. It participates in nucleotide-sugar biosynthesis; UDP-N-acetyl-alpha-D-glucosamine biosynthesis; N-acetyl-alpha-D-glucosamine 1-phosphate from alpha-D-glucosamine 6-phosphate (route II): step 2/2. The protein operates within nucleotide-sugar biosynthesis; UDP-N-acetyl-alpha-D-glucosamine biosynthesis; UDP-N-acetyl-alpha-D-glucosamine from N-acetyl-alpha-D-glucosamine 1-phosphate: step 1/1. Its pathway is bacterial outer membrane biogenesis; LPS lipid A biosynthesis. Its function is as follows. Catalyzes the last two sequential reactions in the de novo biosynthetic pathway for UDP-N-acetylglucosamine (UDP-GlcNAc). The C-terminal domain catalyzes the transfer of acetyl group from acetyl coenzyme A to glucosamine-1-phosphate (GlcN-1-P) to produce N-acetylglucosamine-1-phosphate (GlcNAc-1-P), which is converted into UDP-GlcNAc by the transfer of uridine 5-monophosphate (from uridine 5-triphosphate), a reaction catalyzed by the N-terminal domain. This is Bifunctional protein GlmU from Brucella anthropi (strain ATCC 49188 / DSM 6882 / CCUG 24695 / JCM 21032 / LMG 3331 / NBRC 15819 / NCTC 12168 / Alc 37) (Ochrobactrum anthropi).